The chain runs to 387 residues: 1-deoxy-D-xylulose 5-phosphate reductoisomerase (387 aa).

The NADPH site is built by Thr11, Gly12, Ser13, Ile14, Gly37, Arg38, Asn39, and Asn125. Lys126 serves as a coordination point for 1-deoxy-D-xylulose 5-phosphate. An NADPH-binding site is contributed by Glu127. Position 151 (Asp151) interacts with Mn(2+). Residues Ser152, Glu153, Ser177, and His200 each coordinate 1-deoxy-D-xylulose 5-phosphate. Glu153 contacts Mn(2+). Gly206 lines the NADPH pocket. The 1-deoxy-D-xylulose 5-phosphate site is built by Ser213, Asn218, Lys219, and Glu222. Glu222 is a binding site for Mn(2+).

Belongs to the DXR family. It depends on Mg(2+) as a cofactor. Requires Mn(2+) as cofactor.

The enzyme catalyses 2-C-methyl-D-erythritol 4-phosphate + NADP(+) = 1-deoxy-D-xylulose 5-phosphate + NADPH + H(+). Its pathway is isoprenoid biosynthesis; isopentenyl diphosphate biosynthesis via DXP pathway; isopentenyl diphosphate from 1-deoxy-D-xylulose 5-phosphate: step 1/6. Catalyzes the NADPH-dependent rearrangement and reduction of 1-deoxy-D-xylulose-5-phosphate (DXP) to 2-C-methyl-D-erythritol 4-phosphate (MEP). This chain is 1-deoxy-D-xylulose 5-phosphate reductoisomerase, found in Desulforamulus reducens (strain ATCC BAA-1160 / DSM 100696 / MI-1) (Desulfotomaculum reducens).